We begin with the raw amino-acid sequence, 696 residues long: DNA-directed RNA polymerase subunit beta' (696 aa).

Zn(2+) is bound by residues cysteine 70, cysteine 72, cysteine 85, and cysteine 88. Mg(2+) is bound by residues aspartate 540, aspartate 542, and aspartate 544.

This sequence belongs to the RNA polymerase beta' chain family. RpoC1 subfamily. As to quaternary structure, in plastids the minimal PEP RNA polymerase catalytic core is composed of four subunits: alpha, beta, beta', and beta''. When a (nuclear-encoded) sigma factor is associated with the core the holoenzyme is formed, which can initiate transcription. The cofactor is Mg(2+). It depends on Zn(2+) as a cofactor.

The protein localises to the plastid. It localises to the chloroplast. It catalyses the reaction RNA(n) + a ribonucleoside 5'-triphosphate = RNA(n+1) + diphosphate. In terms of biological role, DNA-dependent RNA polymerase catalyzes the transcription of DNA into RNA using the four ribonucleoside triphosphates as substrates. In Phaeodactylum tricornutum (strain CCAP 1055/1), this protein is DNA-directed RNA polymerase subunit beta'.